The primary structure comprises 517 residues: Crotonobetaine/carnitine--CoA ligase (517 aa).

It belongs to the ATP-dependent AMP-binding enzyme family.

The catalysed reaction is 4-(trimethylamino)butanoate + ATP + CoA = 4-(trimethylamino)butanoyl-CoA + AMP + diphosphate. It catalyses the reaction crotonobetaine + ATP + CoA = crotonobetainyl-CoA + AMP + diphosphate. The enzyme catalyses (R)-carnitine + ATP + CoA = (R)-carnitinyl-CoA + AMP + diphosphate. Its pathway is amine and polyamine metabolism; carnitine metabolism. In terms of biological role, catalyzes the transfer of CoA to carnitine, generating the initial carnitinyl-CoA needed for the CaiB reaction cycle. Also has activity toward crotonobetaine and gamma-butyrobetaine. This chain is Crotonobetaine/carnitine--CoA ligase, found in Escherichia coli O1:K1 / APEC.